The following is a 413-amino-acid chain: Isobutyryl-CoA dehydrogenase, mitochondrial (413 aa).

A mitochondrion-targeting transit peptide spans 1-20; sequence MAMLRSGYRRFGCLRAALKS. The residue at position 48 (K48) is an N6-acetyllysine; alternate. Residue K48 is modified to N6-succinyllysine; alternate. Residues 156 to 165 and 189 to 191 each bind FAD; these read YCLTEPGSGS and FIS. Position 165 (S165) interacts with substrate. An N6-succinyllysine modification is found at K211. Position 229 is an N6-acetyllysine (K229). Position 269 is an N6-succinyllysine (K269). Residue 272 to 275 coordinates substrate; sequence NGGR. FAD-binding positions include R300, 310–311, and 369–373; these read SQ and QMHGG. The active-site Proton acceptor is the E396. Residue 398-400 coordinates FAD; sequence SNE. R408 provides a ligand contact to substrate.

The protein belongs to the acyl-CoA dehydrogenase family. As to quaternary structure, homotetramer, formed by a dimer of dimers. FAD is required as a cofactor.

The protein localises to the mitochondrion. It catalyses the reaction 2-methylpropanoyl-CoA + oxidized [electron-transfer flavoprotein] + H(+) = 2-methylpropenoyl-CoA + reduced [electron-transfer flavoprotein]. The catalysed reaction is (2S)-2-methylbutanoyl-CoA + oxidized [electron-transfer flavoprotein] + H(+) = (2E)-2-methylbut-2-enoyl-CoA + reduced [electron-transfer flavoprotein]. The enzyme catalyses propanoyl-CoA + oxidized [electron-transfer flavoprotein] + H(+) = acryloyl-CoA + reduced [electron-transfer flavoprotein]. The protein operates within amino-acid degradation; L-valine degradation. Functionally, isobutyryl-CoA dehydrogenase which catalyzes the conversion of 2-methylpropanoyl-CoA to (2E)-2-methylpropenoyl-CoA in the valine catabolic pathway. To a lesser extent, also able to catalyze the oxidation of (2S)-2-methylbutanoyl-CoA. The protein is Isobutyryl-CoA dehydrogenase, mitochondrial of Mus musculus (Mouse).